The sequence spans 513 residues: Probable vesicular acetylcholine transporter-A (513 aa).

At 1–39 (MATEESGGLAQTAAVKLSEMGERTKQLGNAIQDPERQRR) the chain is on the cytoplasmic side. The helical transmembrane segment at 40-60 (IILVIVCVALLLDNMLYMVIV) threads the bilayer. Topologically, residues 61-98 (PIVPDYLAHLESESEQAHVKGNSSINITQNENFDLQIG) are lumenal, vesicle. N-linked (GlcNAc...) asparagine glycans are attached at residues Asn82 and Asn86. Residues 99 to 119 (VLFASKAILQLLVNPLTGTFI) traverse the membrane as a helical segment. At 120 to 125 (DRVGYD) the chain is on the cytoplasmic side. The chain crosses the membrane as a helical span at residues 126 to 146 (IPLLIGLSIMFVSTCIFAFAE). Residues 147 to 156 (NYATLFMARS) are Lumenal, vesicle-facing. Residues 157–174 (LQGLGSAFADTSGIAMIA) traverse the membrane as a helical segment. At 175-186 (DKYAEESERSRA) the chain is on the cytoplasmic side. The helical transmembrane segment at 187–207 (LGIALAFISFGSLAAPPFGGV) threads the bilayer. Topologically, residues 208–215 (LYEFAGKR) are lumenal, vesicle. The helical transmembrane segment at 216 to 236 (FPFIALACVCLADGILCLTVL) threads the bilayer. The Cytoplasmic portion of the chain corresponds to 237-257 (KPFSSRTRENMPVGTPIYKLM). The helical transmembrane segment at 258–278 (IDPYIAVVAGALTTCNIPLAF) threads the bilayer. Residues 279–296 (LEPTIANWMEETMNASQW) are Lumenal, vesicle-facing. Residue Asn292 is glycosylated (N-linked (GlcNAc...) asparagine). The helical transmembrane segment at 297–317 (QIGITWLPAFFPHILGVYLTV) threads the bilayer. Residues 318–327 (KLAAKYPHLQ) are Cytoplasmic-facing. A helical membrane pass occupies residues 328 to 348 (WFYGALGMVIIGASSCIVPAC). Over 349-353 (KNFEQ) the chain is Lumenal, vesicle. The helical transmembrane segment at 354–374 (LIIPLCGVCFGIALVDTALLP) threads the bilayer. The Cytoplasmic segment spans residues 375–390 (TLAFLVDVRHVSVYGS). A helical membrane pass occupies residues 391–411 (VYAIADISYCVAYALGPIVAG). Topologically, residues 412 to 418 (KIVHDLG) are lumenal, vesicle. The chain crosses the membrane as a helical span at residues 419 to 439 (FVQLNLGMGLANVLYAPALLL). At 440-513 (LRNVSLMKPS…EEETSEPEYI (74 aa)) the chain is on the cytoplasmic side. A disordered region spans residues 475-513 (RKKHGYSSSGNCVPIDENGTFAGQSKSFSEEETSEPEYI). Acidic residues predominate over residues 504 to 513 (EEETSEPEYI).

The protein belongs to the major facilitator superfamily. Vesicular transporter family.

Its subcellular location is the membrane. Functionally, involved in acetylcholine transport into synaptic vesicles. This chain is Probable vesicular acetylcholine transporter-A, found in Danio rerio (Zebrafish).